Here is a 991-residue protein sequence, read N- to C-terminus: Integrator complex subunit 8 (991 aa).

The span at 1-10 (MSAEAADREA) shows a compositional bias: basic and acidic residues. The segment at 1-22 (MSAEAADREAATSSRPCTPPQT) is disordered. Over residues 11–22 (ATSSRPCTPPQT) the composition is skewed to polar residues. The WFEF motif motif lies at 24–29 (WFEFLL). TPR repeat units lie at residues 250-288 (CQGC…VSKI), 319-355 (SQPA…SLPD), 569-602 (VYIL…VTEF), and 829-862 (HSWL…CSDF).

This sequence belongs to the Integrator subunit 8 family. In terms of assembly, component of the Integrator complex, composed of core subunits INTS1, INTS2, INTS3, INTS4, INTS5, INTS6, INTS7, INTS8, INTS9/RC74, INTS10, INTS11/CPSF3L, INTS12, INTS13, INTS14 and INTS15. The core complex associates with protein phosphatase 2A subunits PPP2CA and PPP2R1A, to form the Integrator-PP2A (INTAC) complex.

It localises to the nucleus. The protein localises to the chromosome. Component of the integrator complex, a multiprotein complex that terminates RNA polymerase II (Pol II) transcription in the promoter-proximal region of genes. The integrator complex provides a quality checkpoint during transcription elongation by driving premature transcription termination of transcripts that are unfavorably configured for transcriptional elongation: the complex terminates transcription by (1) catalyzing dephosphorylation of the C-terminal domain (CTD) of Pol II subunit POLR2A/RPB1 and SUPT5H/SPT5, (2) degrading the exiting nascent RNA transcript via endonuclease activity and (3) promoting the release of Pol II from bound DNA. The integrator complex is also involved in terminating the synthesis of non-coding Pol II transcripts, such as enhancer RNAs (eRNAs), small nuclear RNAs (snRNAs), telomerase RNAs and long non-coding RNAs (lncRNAs). Within the integrator complex, INTS8 is required for the recruitment of protein phosphatase 2A (PP2A) to transcription pause-release checkpoint. The polypeptide is Integrator complex subunit 8 (ints8) (Xenopus laevis (African clawed frog)).